A 239-amino-acid chain; its full sequence is Probable inner membrane transporter protein TsaS (239 aa).

4 helical membrane passes run 65–85, 128–148, 160–180, and 186–206; these read AIGA…WLMG, GLVG…IALL, ATVP…LFGA, and AHTF…VVLG.

Belongs to the 4-toluene sulfonate uptake permease (TSUP) (TC 2.A.102) family. Part of a two-component transport system composed of TsaT and TsaS.

The protein localises to the cell inner membrane. Its function is as follows. Involved in the uptake of p-toluenesulphonate (TSA). The polypeptide is Probable inner membrane transporter protein TsaS (tsaS) (Comamonas testosteroni (Pseudomonas testosteroni)).